The primary structure comprises 706 residues: Glutamine-dependent NAD(+) synthetase (706 aa).

The region spanning 5–275 is the CN hydrolase domain; it reads VTVATCALNQ…VEVLTATLDL (271 aa). Residue Glu-45 is the Proton acceptor; for glutaminase activity of the active site. The For glutaminase activity role is filled by Lys-114. Cys-175 acts as the Nucleophile; for glutaminase activity in catalysis. Residues 325 to 706 form a ligase region; the sequence is YHSPAEEISL…RQRQELDGVD (382 aa). 355–362 lines the ATP pocket; it reads PLSGGVDS. The active site involves Ser-357.

In the C-terminal section; belongs to the NAD synthetase family. Homohexamer.

The catalysed reaction is deamido-NAD(+) + L-glutamine + ATP + H2O = L-glutamate + AMP + diphosphate + NAD(+) + H(+). The protein operates within cofactor biosynthesis; NAD(+) biosynthesis; NAD(+) from deamido-NAD(+) (L-Gln route): step 1/1. Its function is as follows. Catalyzes the ATP-dependent amidation of deamido-NAD to form NAD. Uses L-glutamine as a nitrogen source. The protein is Glutamine-dependent NAD(+) synthetase (NADSYN1) of Bos taurus (Bovine).